Here is a 160-residue protein sequence, read N- to C-terminus: NADH-quinone oxidoreductase subunit I (160 aa).

2 4Fe-4S ferredoxin-type domains span residues 52–81 (RRYSNGEERCIACKLCEVICPAQAIVIEAE) and 91–120 (TRYDIDMTKCIYCGLCQEACPVDAIVEGPN). Cysteine 61, cysteine 64, cysteine 67, cysteine 71, cysteine 100, cysteine 103, cysteine 106, and cysteine 110 together coordinate [4Fe-4S] cluster.

The protein belongs to the complex I 23 kDa subunit family. As to quaternary structure, NDH-1 is composed of 14 different subunits. Subunits NuoA, H, J, K, L, M, N constitute the membrane sector of the complex. Requires [4Fe-4S] cluster as cofactor.

Its subcellular location is the cell membrane. It catalyses the reaction a quinone + NADH + 5 H(+)(in) = a quinol + NAD(+) + 4 H(+)(out). Its function is as follows. NDH-1 shuttles electrons from NADH, via FMN and iron-sulfur (Fe-S) centers, to quinones in the respiratory chain. The immediate electron acceptor for the enzyme in this species is believed to be ubiquinone. Couples the redox reaction to proton translocation (for every two electrons transferred, four hydrogen ions are translocated across the cytoplasmic membrane), and thus conserves the redox energy in a proton gradient. The polypeptide is NADH-quinone oxidoreductase subunit I (Wolbachia sp. subsp. Brugia malayi (strain TRS)).